The chain runs to 350 residues: Small ribosomal subunit biogenesis GTPase RsgA (350 aa).

The span at 1-17 (MSKNKLSKGQQRRVNAN) shows a compositional bias: polar residues. The tract at residues 1-33 (MSKNKLSKGQQRRVNANHQRRLKTSKEKPDYDD) is disordered. Residues 104–273 (TSVLTRPDFY…VIDSPGVREF (170 aa)) enclose the CP-type G domain. Residues 160–163 (NKID) and 214–222 (GQSGVGKSS) each bind GTP. Zn(2+)-binding residues include cysteine 297, cysteine 302, histidine 304, and cysteine 310.

The protein belongs to the TRAFAC class YlqF/YawG GTPase family. RsgA subfamily. As to quaternary structure, monomer. Associates with 30S ribosomal subunit, binds 16S rRNA. Requires Zn(2+) as cofactor.

The protein resides in the cytoplasm. One of several proteins that assist in the late maturation steps of the functional core of the 30S ribosomal subunit. Helps release RbfA from mature subunits. May play a role in the assembly of ribosomal proteins into the subunit. Circularly permuted GTPase that catalyzes slow GTP hydrolysis, GTPase activity is stimulated by the 30S ribosomal subunit. In Escherichia coli O6:H1 (strain CFT073 / ATCC 700928 / UPEC), this protein is Small ribosomal subunit biogenesis GTPase RsgA.